We begin with the raw amino-acid sequence, 323 residues long: Sporulation-delaying protein SdpB (323 aa).

The next 6 membrane-spanning stretches (helical) occupy residues 27-49 (LLGF…SYSA), 70-92 (SINF…IGWR), 112-134 (LTID…VTLL), 155-177 (TVLF…NAAL), 219-241 (IVVI…ISNI), and 248-270 (LVLG…FGLI).

The protein localises to the cell membrane. Functionally, required for the maturation of SdpC to SDP. Not required for SdpC signal peptide cleavage, secretion from the cell or disulfide bond formation. The sequence is that of Sporulation-delaying protein SdpB from Bacillus subtilis (strain 168).